A 155-amino-acid chain; its full sequence is Endoribonuclease YbeY (155 aa).

Zn(2+) contacts are provided by H114, H118, and H124.

It belongs to the endoribonuclease YbeY family. Requires Zn(2+) as cofactor.

The protein localises to the cytoplasm. In terms of biological role, single strand-specific metallo-endoribonuclease involved in late-stage 70S ribosome quality control and in maturation of the 3' terminus of the 16S rRNA. The polypeptide is Endoribonuclease YbeY (Photorhabdus laumondii subsp. laumondii (strain DSM 15139 / CIP 105565 / TT01) (Photorhabdus luminescens subsp. laumondii)).